Here is a 630-residue protein sequence, read N- to C-terminus: MDFPSRFEVIVIGGGHAGTEAALASARMGVKTLLLTHNVETLGHMSCNPAIGGIGKSHLVKEIDALGGAMALATDKSGIQFRVLNNRKGPAVRATRAQADRAIYKAVVREILENQPNLWIFQQSCDDLIVEQDQVKGVVTQMGLRFFADSVVLTTGTFLGGLIHIGLQNHSGGRAGDPPSIALAHRMRELPLRVGRLKTGTPPRIDGRSVDFSVMTEQPGDTPIPVMSFMGNAAMHPRQVSCWITHTNARTHEIIASNLDRSPMYSGVIEGVGPRYCPSIEDKIHRFADKESHQVFIEPEGLTTHELYPNGISTSLPFDVQLELVRSIRGMENAHIVRPGYAIEYDYFDPRDLKYSLETKVIGGLFFAGQINGTTGYEEAGAQGLLAGTNAALRAQGRESWCPRRDEAYIGVLVDDLITLGTQEPYRMFTSRAEYRLILREDNADLRLTEKGRELGLIDDQRWAAFCAKRDGIEREEQRLKSTWVRPNTPQGQAVVDKFGTPLSHEYSLLNLLARPEVDYAGLIEATGGEQIDPQVAEQVEIKTKYAGYIDRQQDEIARLRASEDTCLPVDIDYTSISGLSKEIQGKLGQTRPQTLGQASRIPGVTPAAISLLLIHLKKRGAGRELEQSA.

G13–G18 lines the FAD pocket. G273 to F287 contacts NAD(+).

Belongs to the MnmG family. Homodimer. Heterotetramer of two MnmE and two MnmG subunits. Requires FAD as cofactor.

The protein resides in the cytoplasm. Its function is as follows. NAD-binding protein involved in the addition of a carboxymethylaminomethyl (cmnm) group at the wobble position (U34) of certain tRNAs, forming tRNA-cmnm(5)s(2)U34. The protein is tRNA uridine 5-carboxymethylaminomethyl modification enzyme MnmG of Pseudomonas putida (strain W619).